The sequence spans 83 residues: Putative regulatory protein FMG_0656 (83 aa).

Belongs to the RemA family.

The chain is Putative regulatory protein FMG_0656 from Finegoldia magna (strain ATCC 29328 / DSM 20472 / WAL 2508) (Peptostreptococcus magnus).